A 204-amino-acid chain; its full sequence is Large ribosomal subunit protein eL15 (204 aa).

It belongs to the eukaryotic ribosomal protein eL15 family. Component of the large ribosomal subunit.

The protein localises to the cytoplasm. Component of the large ribosomal subunit. The ribosome is a large ribonucleoprotein complex responsible for the synthesis of proteins in the cell. The protein is Large ribosomal subunit protein eL15 (rpl15) of Tachysurus fulvidraco (Yellow catfish).